The chain runs to 169 residues: ATP-dependent Clp protease adapter protein CLPS2, chloroplastic (169 aa).

Residues Met-1 to Phe-33 constitute a chloroplast transit peptide. The segment at Asp-67–Tyr-92 is disordered.

This sequence belongs to the ClpS family.

It localises to the plastid. It is found in the chloroplast stroma. Small adapter protein that modulate the activity of plastid Clp protease system (CLPC). Probably involved in substrate selection for plastid CLPC. In Chlamydomonas reinhardtii (Chlamydomonas smithii), this protein is ATP-dependent Clp protease adapter protein CLPS2, chloroplastic.